Consider the following 122-residue polypeptide: Large ribosomal subunit protein uL14 (122 aa).

This sequence belongs to the universal ribosomal protein uL14 family. Part of the 50S ribosomal subunit. Forms a cluster with proteins L3 and L19. In the 70S ribosome, L14 and L19 interact and together make contacts with the 16S rRNA in bridges B5 and B8.

Its function is as follows. Binds to 23S rRNA. Forms part of two intersubunit bridges in the 70S ribosome. The protein is Large ribosomal subunit protein uL14 of Pseudomonas entomophila (strain L48).